The primary structure comprises 327 residues: Phenylalanine--tRNA ligase alpha subunit (327 aa).

E252 is a Mg(2+) binding site.

The protein belongs to the class-II aminoacyl-tRNA synthetase family. Phe-tRNA synthetase alpha subunit type 1 subfamily. Tetramer of two alpha and two beta subunits. Mg(2+) is required as a cofactor.

It is found in the cytoplasm. The catalysed reaction is tRNA(Phe) + L-phenylalanine + ATP = L-phenylalanyl-tRNA(Phe) + AMP + diphosphate + H(+). The chain is Phenylalanine--tRNA ligase alpha subunit from Proteus mirabilis (strain HI4320).